Consider the following 347-residue polypeptide: NADH-quinone oxidoreductase subunit H (347 aa).

Helical transmembrane passes span Ile14 to Leu34, Ala82 to Ile102, Val115 to Gly135, Ile161 to Val181, Leu198 to Leu218, Ala258 to Leu278, Trp285 to Ile305, and Leu321 to Leu341.

This sequence belongs to the complex I subunit 1 family. As to quaternary structure, NDH-1 is composed of 14 different subunits. Subunits NuoA, H, J, K, L, M, N constitute the membrane sector of the complex.

Its subcellular location is the cell inner membrane. The catalysed reaction is a quinone + NADH + 5 H(+)(in) = a quinol + NAD(+) + 4 H(+)(out). Its function is as follows. NDH-1 shuttles electrons from NADH, via FMN and iron-sulfur (Fe-S) centers, to quinones in the respiratory chain. The immediate electron acceptor for the enzyme in this species is believed to be ubiquinone. Couples the redox reaction to proton translocation (for every two electrons transferred, four hydrogen ions are translocated across the cytoplasmic membrane), and thus conserves the redox energy in a proton gradient. This subunit may bind ubiquinone. The sequence is that of NADH-quinone oxidoreductase subunit H from Allorhizobium ampelinum (strain ATCC BAA-846 / DSM 112012 / S4) (Agrobacterium vitis (strain S4)).